Consider the following 538-residue polypeptide: Phosphoenolpyruvate carboxykinase (ATP) (538 aa).

The substrate site is built by R64, Y206, and K212. ATP is bound by residues K212, H231, and G247 to T255. Mn(2+)-binding residues include K212 and H231. D268 provides a ligand contact to Mn(2+). Residues E296, R332, R448–I449, and T454 contribute to the ATP site. Residue R332 participates in substrate binding.

The protein belongs to the phosphoenolpyruvate carboxykinase (ATP) family. As to quaternary structure, monomer. Mn(2+) is required as a cofactor.

The protein resides in the cytoplasm. It catalyses the reaction oxaloacetate + ATP = phosphoenolpyruvate + ADP + CO2. The protein operates within carbohydrate biosynthesis; gluconeogenesis. Involved in the gluconeogenesis. Catalyzes the conversion of oxaloacetate (OAA) to phosphoenolpyruvate (PEP) through direct phosphoryl transfer between the nucleoside triphosphate and OAA. In Enterobacter sp. (strain 638), this protein is Phosphoenolpyruvate carboxykinase (ATP).